The sequence spans 149 residues: Glycophorin-A (149 aa).

A signal peptide spans 1–19 (MYGKIIFVLLLSAIVSISA). Topologically, residues 20-90 (SSTTEVAMHT…QLVHRFSEPE (71 aa)) are extracellular. Serine 21 carries O-linked (GalNAc...) serine glycosylation. Threonine 22, threonine 23, and threonine 29 each carry an O-linked (GalNAc...) threonine glycan. Serine 30 carries O-linked (GalNAc...) serine glycosylation. The O-linked (GalNAc...) threonine glycan is linked to threonine 31. Serine 32 carries an O-linked (GalNAc...) serine glycan. An O-linked (GalNAc...) threonine glycan is attached at threonine 35. Residues serine 37 and serine 40 are each glycosylated (O-linked (GalNAc...) serine). Threonine 43 carries O-linked (GalNAc...) threonine glycosylation. An O-linked (GalNAc...) serine glycan is attached at serine 44. O-linked (GalNAc...) threonine glycosylation is found at threonine 51 and threonine 55. O-linked (GalNAc...) serine glycosylation occurs at serine 62. Threonine 68 carries O-linked (GalNAc...) threonine glycosylation. Residues 91 to 113 (ITLIIFGVMAGVIGTILLIYYSI) form a helical membrane-spanning segment. Topologically, residues 114 to 149 (RRLIKKSPSDVKPLPSPDTDVPLSSVEIENPETSDQ) are cytoplasmic. Residues 122–149 (SDVKPLPSPDTDVPLSSVEIENPETSDQ) are disordered. Serine 137 and serine 147 each carry phosphoserine.

This sequence belongs to the glycophorin-A family. In terms of assembly, homodimer. Component of the ankyrin-1 complex in the erythrocyte, composed of ANK1, RHCE, RHAG, SLC4A1, EPB42, GYPA, GYPB and AQP1. Interacts with SLC4A1; a GYPA monomer is bound at each end of the SLC4A1 dimer forming a heterotetramer.

The protein localises to the cell membrane. In terms of biological role, component of the ankyrin-1 complex, a multiprotein complex involved in the stability and shape of the erythrocyte membrane. Glycophorin A is the major intrinsic membrane protein of the erythrocyte. The N-terminal glycosylated segment, which lies outside the erythrocyte membrane, has MN blood group receptors. Appears to be important for the function of SLC4A1 and is required for high activity of SLC4A1. May be involved in translocation of SLC4A1 to the plasma membrane. The sequence is that of Glycophorin-A from Pan troglodytes (Chimpanzee).